We begin with the raw amino-acid sequence, 267 residues long: GTP cyclohydrolase FolE2 (267 aa).

This sequence belongs to the GTP cyclohydrolase IV family.

It catalyses the reaction GTP + H2O = 7,8-dihydroneopterin 3'-triphosphate + formate + H(+). It participates in cofactor biosynthesis; 7,8-dihydroneopterin triphosphate biosynthesis; 7,8-dihydroneopterin triphosphate from GTP: step 1/1. In terms of biological role, converts GTP to 7,8-dihydroneopterin triphosphate. The chain is GTP cyclohydrolase FolE2 from Citrifermentans bemidjiense (strain ATCC BAA-1014 / DSM 16622 / JCM 12645 / Bem) (Geobacter bemidjiensis).